The primary structure comprises 328 residues: Tetraacyldisaccharide 4'-kinase (328 aa).

55-62 (TAGGNGKT) contributes to the ATP binding site.

The protein belongs to the LpxK family.

The enzyme catalyses lipid A disaccharide (E. coli) + ATP = lipid IVA (E. coli) + ADP + H(+). It participates in glycolipid biosynthesis; lipid IV(A) biosynthesis; lipid IV(A) from (3R)-3-hydroxytetradecanoyl-[acyl-carrier-protein] and UDP-N-acetyl-alpha-D-glucosamine: step 6/6. Its function is as follows. Transfers the gamma-phosphate of ATP to the 4'-position of a tetraacyldisaccharide 1-phosphate intermediate (termed DS-1-P) to form tetraacyldisaccharide 1,4'-bis-phosphate (lipid IVA). The chain is Tetraacyldisaccharide 4'-kinase (lpxK) from Escherichia coli (strain K12).